Consider the following 148-residue polypeptide: Small ribosomal subunit protein uS15 (148 aa).

The protein belongs to the universal ribosomal protein uS15 family.

The sequence is that of Small ribosomal subunit protein uS15 (RPS13) from Encephalitozoon cuniculi (strain GB-M1) (Microsporidian parasite).